The sequence spans 102 residues: Protein RnfH (102 aa).

It belongs to the UPF0125 (RnfH) family.

This chain is Protein RnfH, found in Pseudomonas entomophila (strain L48).